The chain runs to 62 residues: MAKVCEICGKGVVYGHQISHSNIHTKRKWLPNLQRVRAVVNGTRRRITVCTTCLKSGKVQRA.

It belongs to the bacterial ribosomal protein bL28 family.

This chain is Large ribosomal subunit protein bL28, found in Carboxydothermus hydrogenoformans (strain ATCC BAA-161 / DSM 6008 / Z-2901).